A 561-amino-acid polypeptide reads, in one-letter code: uncharacterized protein (561 aa).

2 consecutive transmembrane segments (helical) span residues 29–49 (FIFN…KKII) and 80–100 (FLFH…AVVI).

It localises to the cell membrane. This is an uncharacterized protein from Mycoplasma pneumoniae (strain ATCC 29342 / M129 / Subtype 1) (Mycoplasmoides pneumoniae).